A 237-amino-acid polypeptide reads, in one-letter code: Uridylate kinase (237 aa).

10-13 provides a ligand contact to ATP; the sequence is KFSG. An involved in allosteric activation by GTP region spans residues 18–23; it reads GDSGFG. Gly-52 provides a ligand contact to UMP. Gly-53 and Arg-57 together coordinate ATP. UMP is bound by residues Asp-73 and 134 to 141; that span reads TGNPFFTT. Residues Thr-161, Tyr-167, and Asp-170 each coordinate ATP.

Belongs to the UMP kinase family. As to quaternary structure, homohexamer.

The protein resides in the cytoplasm. It catalyses the reaction UMP + ATP = UDP + ADP. The protein operates within pyrimidine metabolism; CTP biosynthesis via de novo pathway; UDP from UMP (UMPK route): step 1/1. With respect to regulation, allosterically activated by GTP. Inhibited by UTP. In terms of biological role, catalyzes the reversible phosphorylation of UMP to UDP. The sequence is that of Uridylate kinase from Campylobacter hominis (strain ATCC BAA-381 / DSM 21671 / CCUG 45161 / LMG 19568 / NCTC 13146 / CH001A).